The chain runs to 264 residues: 5'-nucleotidase SurE (264 aa).

A divalent metal cation contacts are provided by aspartate 9, aspartate 10, serine 40, and asparagine 95.

The protein belongs to the SurE nucleotidase family. A divalent metal cation serves as cofactor.

The protein localises to the cytoplasm. The enzyme catalyses a ribonucleoside 5'-phosphate + H2O = a ribonucleoside + phosphate. In terms of biological role, nucleotidase that shows phosphatase activity on nucleoside 5'-monophosphates. This is 5'-nucleotidase SurE from Helicobacter hepaticus (strain ATCC 51449 / 3B1).